We begin with the raw amino-acid sequence, 258 residues long: Hydroxyethylthiazole kinase (258 aa).

Met37 is a binding site for substrate. Positions 112 and 158 each coordinate ATP. Ala185 contributes to the substrate binding site.

Belongs to the Thz kinase family. Mg(2+) is required as a cofactor.

The enzyme catalyses 5-(2-hydroxyethyl)-4-methylthiazole + ATP = 4-methyl-5-(2-phosphooxyethyl)-thiazole + ADP + H(+). The protein operates within cofactor biosynthesis; thiamine diphosphate biosynthesis; 4-methyl-5-(2-phosphoethyl)-thiazole from 5-(2-hydroxyethyl)-4-methylthiazole: step 1/1. Catalyzes the phosphorylation of the hydroxyl group of 4-methyl-5-beta-hydroxyethylthiazole (THZ). The chain is Hydroxyethylthiazole kinase from Rhizobium etli (strain CIAT 652).